A 120-amino-acid polypeptide reads, in one-letter code: Chaperonin GroEL (120 aa).

ATP is bound at residue 23-27 (DGTTT).

This sequence belongs to the chaperonin (HSP60) family. In terms of assembly, forms a cylinder of 14 subunits composed of two heptameric rings stacked back-to-back. Interacts with the co-chaperonin GroES.

The protein localises to the cytoplasm. It catalyses the reaction ATP + H2O + a folded polypeptide = ADP + phosphate + an unfolded polypeptide.. Functionally, together with its co-chaperonin GroES, plays an essential role in assisting protein folding. The GroEL-GroES system forms a nano-cage that allows encapsulation of the non-native substrate proteins and provides a physical environment optimized to promote and accelerate protein folding. The chain is Chaperonin GroEL from Mycobacterium gordonae.